A 972-amino-acid chain; its full sequence is Mast/stem cell growth factor receptor Kit (972 aa).

An N-terminal signal peptide occupies residues 1-25 (MRGARGAWDFLCVLLLLLRVQTGSS). Residues 26–520 (QPSVSPEEAS…QIQPHTLFTP (495 aa)) are Extracellular-facing. Ig-like C2-type domains are found at residues 27–112 (PSVS…VFVR), 121–205 (DRSL…LKVR), 212–308 (PVVS…LEVV), 317–410 (PMIN…VYVN), and 413–507 (PEIL…FNFA). Cysteines 58 and 97 form a disulfide. 2 N-linked (GlcNAc...) asparagine glycosylation sites follow: asparagine 130 and asparagine 145. Intrachain disulfides connect cysteine 136–cysteine 186, cysteine 151–cysteine 183, and cysteine 233–cysteine 290. Residues asparagine 283, asparagine 300, asparagine 320, asparagine 352, asparagine 367, asparagine 463, and asparagine 486 are each glycosylated (N-linked (GlcNAc...) asparagine). A disulfide bond links cysteine 428 and cysteine 491. Residues 521 to 541 (LLIGFVVVAGMMCIIVMILTY) form a helical membrane-spanning segment. Topologically, residues 542-972 (KYLQKPMYEV…SQPLLVRDDV (431 aa)) are cytoplasmic. Residues tyrosine 543 and tyrosine 549 each carry the phosphotyrosine modification. A Mg(2+)-binding site is contributed by tyrosine 564. Tyrosine 564 and tyrosine 566 each carry phosphotyrosine; by autocatalysis. Residues 564 to 566 (YVY) form an important for interaction with phosphotyrosine-binding proteins region. The region spanning 585-933 (LSFGKTLGAG…ISESTNHIYS (349 aa)) is the Protein kinase domain. Residues 592-599 (GAGAFGKV), lysine 619, and 667-673 (EYCCYGD) contribute to the ATP site. 2 positions are modified to phosphotyrosine; by autocatalysis: tyrosine 699 and tyrosine 717. Position 726 is a phosphotyrosine (tyrosine 726). 2 positions are modified to phosphoserine; by PKC/PRKCA: serine 737 and serine 742. Catalysis depends on aspartate 788, which acts as the Proton acceptor. ATP is bound at residue arginine 792. Residues asparagine 793 and aspartate 806 each contribute to the Mg(2+) site. Residue serine 817 is modified to Phosphoserine. Residue tyrosine 819 is modified to Phosphotyrosine; by autocatalysis. At serine 887 the chain carries Phosphoserine. Position 896 is a phosphotyrosine (tyrosine 896). Tyrosine 932 carries the phosphotyrosine; by autocatalysis modification. Serine 955 carries the post-translational modification Phosphoserine.

Belongs to the protein kinase superfamily. Tyr protein kinase family. CSF-1/PDGF receptor subfamily. Monomer in the absence of bound KITLG/SCF. Homodimer in the presence of bound KITLG/SCF, forming a heterotetramer with two KITLG/SCF molecules. Interacts (via phosphorylated tyrosine residues) with the adapter proteins GRB2 and GRB7 (via SH2 domain), and SH2B2/APS. Interacts (via C-terminus) with MPDZ (via the tenth PDZ domain). Interacts (via phosphorylated tyrosine residues) with PIK3R1 and PIK3CD. Interacts (via phosphorylated tyrosine) with CRK (isoform Crk-II), FYN, SHC1 and MATK/CHK (via SH2 domain). Interacts with LYN and FES/FPS. Interacts (via phosphorylated tyrosine residues) with the protein phosphatases PTPN6/SHP-1 (via SH2 domain), PTPN11/SHP-2 (via SH2 domain) and PTPRU. Interacts with PLCG1. Interacts with DOK1 and TEC. Interacts with IL1RAP (independent of stimulation with KITLG/SCF). A mast cell-specific KITLG/SCF-induced interleukin-33 signaling complex contains IL1RL1, IL1RAP, KIT and MYD88. Ubiquitinated by SOCS6. KIT is rapidly ubiquitinated after autophosphorylation induced by KITLG/SCF binding, leading to internalization and degradation. In terms of processing, autophosphorylated on tyrosine residues. KITLG/SCF binding promotes autophosphorylation. Phosphorylated tyrosine residues are important for interaction with specific binding partners.

It localises to the cell membrane. It catalyses the reaction L-tyrosyl-[protein] + ATP = O-phospho-L-tyrosyl-[protein] + ADP + H(+). With respect to regulation, present in an inactive conformation in the absence of bound ligand. KITLG/SCF binding leads to dimerization and activation by autophosphorylation on tyrosine residues. Activity is down-regulated by PRKCA-mediated phosphorylation on serine residues. Tyrosine-protein kinase that acts as a cell-surface receptor for the cytokine KITLG/SCF and plays an essential role in the regulation of cell survival and proliferation, hematopoiesis, stem cell maintenance, gametogenesis, mast cell development, migration and function, and in melanogenesis. In response to KITLG/SCF binding, KIT can activate several signaling pathways. Phosphorylates PIK3R1, PLCG1, SH2B2/APS and CBL. Activates the AKT1 signaling pathway by phosphorylation of PIK3R1, the regulatory subunit of phosphatidylinositol 3-kinase. Activated KIT also transmits signals via GRB2 and activation of RAS, RAF1 and the MAP kinases MAPK1/ERK2 and/or MAPK3/ERK1. Promotes activation of STAT family members STAT1, STAT3, STAT5A and STAT5B. Activation of PLCG1 leads to the production of the cellular signaling molecules diacylglycerol and inositol 1,4,5-trisphosphate. KIT signaling is modulated by protein phosphatases, and by rapid internalization and degradation of the receptor. Activated KIT promotes phosphorylation of the protein phosphatases PTPN6/SHP-1 and PTPRU, and of the transcription factors STAT1, STAT3, STAT5A and STAT5B. Promotes phosphorylation of PIK3R1, CBL, CRK (isoform Crk-II), LYN, MAPK1/ERK2 and/or MAPK3/ERK1, PLCG1, SRC and SHC1. In Callithrix jacchus (White-tufted-ear marmoset), this protein is Mast/stem cell growth factor receptor Kit (KIT).